An 87-amino-acid polypeptide reads, in one-letter code: U-scoloptoxin(23)-Er1a (87 aa).

The first 29 residues, 1–29 (MSLIVVRTHSFLFVLVLLLFASVFHSVDS), serve as a signal peptide directing secretion. The interval 32–54 (FNPNGRYGRRDSASALSDASENK) is disordered.

The protein belongs to the scoloptoxin-23 family. In terms of tissue distribution, expressed by the venom gland.

The protein localises to the secreted. The chain is U-scoloptoxin(23)-Er1a from Ethmostigmus rubripes (Giant centipede).